Consider the following 68-residue polypeptide: Small integral membrane protein 45 (68 aa).

A helical membrane pass occupies residues 7-27; that stretch reads WFVPVYLVISVLILVGFGACI.

Highly expressed in brain.

The protein localises to the nucleus. The protein resides in the cytoplasm. It localises to the membrane. Its function is as follows. Plays a role in the regulation of neuron maturation. The polypeptide is Small integral membrane protein 45 (Homo sapiens (Human)).